The following is a 137-amino-acid chain: Large ribosomal subunit protein uL16 (137 aa).

Belongs to the universal ribosomal protein uL16 family. As to quaternary structure, part of the 50S ribosomal subunit.

Functionally, binds 23S rRNA and is also seen to make contacts with the A and possibly P site tRNAs. This is Large ribosomal subunit protein uL16 from Spiroplasma kunkelii.